The chain runs to 301 residues: Lufaxin (301 aa).

The N-terminal stretch at M1 to C23 is a signal peptide. Cystine bridges form between C52–C60, C78–C137, C102–C112, and C258–C265. The N-linked (GlcNAc...) asparagine glycan is linked to N262.

Interacts with factor Xa. Associates with complement proconvertase C3b-B complex. Expressed in salivary glands.

The protein resides in the secreted. Sand fly salivary protein with antithrombotic, and anti-complement (alternative pathway) activities. Is a slow, tight, non-competitive, and reversible inhibitor of factor Xa (FXa, F10). Is specific for FXa (Kd=3.86 nM) and does not interact with non-activated FX, or all other enzymes tested. In addition, it blocks prothrombinase and increases both prothrombin time and activated partial thromboplastin time. It also prevents protease-activated receptor 2 (F2RL1, PAR2) activation by FXa. In vivo, it abrogates edema formation triggered by injection of FXa in the paw of mice. Moreover, it prevents FeCl(3)-induced carotid artery thrombus formation and prolongs activated partial thromboplastin time ex vivo, implying that it works as an anticoagulant in vivo. It also inhibits the early steps of the alternative pathway of complement by direct binding to the proconvertase C3b-B complex, by inhibiting activation of factor B and consequently the formation of the C3 convertase. The polypeptide is Lufaxin (Lutzomyia longipalpis (Sand fly)).